Consider the following 179-residue polypeptide: Protein YjaZ (179 aa).

This chain is Protein YjaZ, found in Escherichia coli (strain K12).